A 164-amino-acid polypeptide reads, in one-letter code: Pyruvoyl-dependent arginine decarboxylase (164 aa).

Ser-52 bears the Pyruvic acid (Ser) mark.

This sequence belongs to the PdaD family. Requires pyruvate as cofactor.

The enzyme catalyses L-arginine + H(+) = agmatine + CO2. The chain is Pyruvoyl-dependent arginine decarboxylase from Methanococcus vannielii (strain ATCC 35089 / DSM 1224 / JCM 13029 / OCM 148 / SB).